We begin with the raw amino-acid sequence, 82 residues long: Host translation inhibitor 5b (82 aa).

Involved in host translation shutoff without degradating host RNA. By suppressing host gene expression, facilitates the evasion from host type I interferon immune response. The chain is Host translation inhibitor 5b from Gallus gallus (Chicken).